The primary structure comprises 263 residues: Small ribosomal subunit protein uS2 (263 aa).

Belongs to the universal ribosomal protein uS2 family.

This is Small ribosomal subunit protein uS2 from Hyphomonas neptunium (strain ATCC 15444).